Reading from the N-terminus, the 239-residue chain is Increased recombination centers protein 22-2 (239 aa).

Positions 1-19 (MKLSTIFTAFAATIATVAG) are cleaved as a signal peptide. At 20 to 161 (YETTGSKQTV…AAVSFFDPRL (142 aa)) the chain is on the lumenal side. A helical transmembrane segment spans residues 162–182 (IFLELVLLITFAGLIYVGYEI). The Cytoplasmic segment spans residues 183–239 (WGKQYFKGVAPVKAKKVSAAKASSPVATGPSTTSATGYDTNWIPESHLKQKKTKKVN). Residues 202–222 (AKASSPVATGPSTTSATGYDT) are disordered. Polar residues predominate over residues 211–221 (GPSTTSATGYD).

It belongs to the IRC22 family.

It localises to the endoplasmic reticulum membrane. Functionally, is probably involved in a pathway contributing to genomic integrity. In Candida albicans (strain SC5314 / ATCC MYA-2876) (Yeast), this protein is Increased recombination centers protein 22-2 (IRC22-2).